We begin with the raw amino-acid sequence, 286 residues long: uncharacterized protein (286 aa).

Positions 1–47 (MAIPFLHKGGSDDSTHHHTHDYDHHNHDHHGHDHHSHDSSSNSSSEA) are disordered. Residues 9–26 (GGSDDSTHHHTHDYDHHN) are compositionally biased toward basic and acidic residues. Position 93–100 (93–100 (GPVGSGKT)) interacts with GTP.

It belongs to the SIMIBI class G3E GTPase family. UreG subfamily.

It localises to the cytoplasm. The protein localises to the nucleus. Functionally, probably facilitates nickel incorporation. This is an uncharacterized protein from Schizosaccharomyces pombe (strain 972 / ATCC 24843) (Fission yeast).